We begin with the raw amino-acid sequence, 51 residues long: Large ribosomal subunit protein bL33 (51 aa).

Residues 1-21 form a disordered region; sequence MRDKIKLESSAGTGHFYTTTK. The span at 10-20 shows a compositional bias: polar residues; sequence SAGTGHFYTTT.

The protein belongs to the bacterial ribosomal protein bL33 family.

This is Large ribosomal subunit protein bL33 (rpmG) from Neisseria meningitidis serogroup A / serotype 4A (strain DSM 15465 / Z2491).